The chain runs to 389 residues: Ankyrin repeat domain-containing protein 42 (389 aa).

Residues Met-1 to Ser-21 form a disordered region. Over residues Ser-7–Pro-19 the composition is skewed to polar residues. ANK repeat units lie at residues Val-25 to His-60, Arg-64 to Ala-93, Arg-97 to Val-126, Arg-130 to Asp-159, Asn-163 to Gln-192, Asn-200 to Asp-232, Thr-235 to Glu-265, Asn-269 to Ile-298, and Ala-302 to Asp-332.

This chain is Ankyrin repeat domain-containing protein 42 (ANKRD42), found in Homo sapiens (Human).